The following is a 220-amino-acid chain: Probable N-acetyl-alpha-D-glucosaminyl L-malate deacetylase 2 (220 aa).

Residues His11, Asp14, and His125 each coordinate Zn(2+).

It belongs to the PIGL family. Zn(2+) is required as a cofactor.

The catalysed reaction is (S)-malyl N-acetyl-alpha-D-glucosaminide + H2O = (S)-malyl alpha-D-glucosaminide + acetate. Involved in bacillithiol (BSH) biosynthesis. Catalyzes the second step of the pathway, the deacetylation of N-acetylglucosaminylmalate (GlcNAc-Mal) to glucosamine malate (GlcN-Mal). Has weak activity compared with bshB1. The polypeptide is Probable N-acetyl-alpha-D-glucosaminyl L-malate deacetylase 2 (Bacillus cereus (strain ATCC 14579 / DSM 31 / CCUG 7414 / JCM 2152 / NBRC 15305 / NCIMB 9373 / NCTC 2599 / NRRL B-3711)).